The primary structure comprises 205 residues: MEGIVNSGLFNWLILPLLIFFSRIIDVTIGTIRIIFVSRGKKYLAPVLGFFEVLVWIMAISQIMQNLNNFVCYFAYAAGFATGTFVGIIIEEKLAIGTLVIRVIVDKNECELKERLSKSGFGVTVVDAKGKNGDVKIIYTIIKRKELQEVVRIIEECNSKAFYSIEDARKVNQGIFRTGTSNHDGTRFFNLFRIHRMSGLDKKTR.

3 helical membrane-spanning segments follow: residues 15 to 37, 44 to 64, and 70 to 90; these read LPLL…IIFV, LAPV…SQIM, and FVCY…GIII.

Belongs to the UPF0316 family.

The protein localises to the cell membrane. This Acetivibrio thermocellus (strain ATCC 27405 / DSM 1237 / JCM 9322 / NBRC 103400 / NCIMB 10682 / NRRL B-4536 / VPI 7372) (Clostridium thermocellum) protein is UPF0316 protein Cthe_2213.